The chain runs to 2036 residues: Proline-rich protein 12 (2036 aa).

3 disordered regions span residues 210-283 (GGGV…RALP), 331-587 (CSPL…GAPG), and 649-697 (APSP…DPQR). Residues 223 to 240 (QTPPYRPGPPDPPPPPRH) show a composition bias toward pro residues. Low complexity predominate over residues 249 to 258 (ASSSAAAAAA). Phosphoserine is present on residues Ser332 and Ser340. The segment covering 340-365 (SPGAGEPSKAGPSGATAGASGRATGP) has biased composition (low complexity). Gly residues-rich tracts occupy residues 367–380 (AAGGGGAGGGGGGY) and 391–400 (TGKGGYGAAA). Low complexity-rich tracts occupy residues 411–432 (STATPKCQSLGGPAAAYATGKA) and 441–458 (QAYSPGQPQGLLGPQAYG). The span at 479 to 490 (PPQPPSGPPPPG) shows a compositional bias: pro residues. Polar residues-rich tracts occupy residues 493-504 (TCQSYSPDQLQG) and 523-537 (GLPTASPSLSYSTGH). Over residues 543–558 (GHGGGWGPSSLGGGGE) the composition is skewed to gly residues. Residue Ser651 is modified to Phosphoserine. Positions 673 to 683 (GLGGSGGAGGP) are enriched in gly residues. Position 738 is a phosphothreonine (Thr738). Disordered stretches follow at residues 758 to 850 (AFLQ…PLQL), 859 to 878 (LEPAAPSPRLRPEESLDPPG), 886 to 925 (ALEPLPPAPGDTGVGPPNSEGKDPAGAYRSPSPQGTKAPR), and 952 to 1068 (EMFG…CSTK). The span at 802 to 817 (LPSVLSHAPSPSPSAS) shows a compositional bias: low complexity. Positions 833-847 (PQPPPPPPPPPPPMP) are enriched in pro residues. Ser865 is subject to Phosphoserine. Residues 1037–1052 (AAPPPPPPPPPPPAPA) are compositionally biased toward pro residues. 2 positions are modified to phosphoserine: Ser1077 and Ser1135. 4 disordered regions span residues 1120–1260 (RLPD…SLTR), 1294–1347 (RHPP…GGAL), 1376–1573 (TLPS…GEGI), and 1668–1840 (HRPP…PGRL). Low complexity predominate over residues 1182 to 1194 (PTTAGPASASTPT). Residues 1199 to 1208 (KPRGRGRGRG) show a composition bias toward basic residues. Residues 1209-1223 (RKAEEAGGTRLEPLK) show a composition bias toward basic and acidic residues. Residue Lys1223 is modified to N6-acetyllysine. The span at 1239–1257 (GTSSGDAISGTDHNSLDSS) shows a compositional bias: polar residues. Phosphothreonine is present on Thr1304. Pro residues-rich tracts occupy residues 1306 to 1317 (PLSPPKSVPPSV) and 1324 to 1338 (PQPPATPAVPHPPPS). Position 1308 is a phosphoserine (Ser1308). Ser1381, Ser1382, and Ser1387 each carry phosphoserine. Pro residues-rich tracts occupy residues 1420 to 1438 (DGPPLAPAAAVPGPPPLPG) and 1458 to 1535 (PPTP…APSP). The span at 1541–1553 (PDTRPLHLAKKQE) shows a compositional bias: basic and acidic residues. Thr1561 carries the post-translational modification Phosphothreonine. Ser1568 bears the Phosphoserine mark. Positions 1691–1703 (APPPKAPAPPPKP) are enriched in pro residues. Composition is skewed to basic and acidic residues over residues 1704-1715 (ETPEKTTSEKPP) and 1737-1769 (PVEKEKEKEKVTRGERPLRGERATSGRQTRPER). At Thr1705 the chain carries Phosphothreonine. A compositionally biased stretch (low complexity) spans 1817 to 1829 (GSSSDSESSPGAP). Ser1925 carries the post-translational modification Phosphoserine.

The protein resides in the nucleus. It is found in the postsynaptic density. Its subcellular location is the synapse. It localises to the synaptosome. The protein is Proline-rich protein 12 of Homo sapiens (Human).